The following is a 454-amino-acid chain: Metacaspase-1A (454 aa).

Over residues 1 to 16 (MSYGYPGQGYGPGGGH) the composition is skewed to gly residues. The interval 1 to 129 (MSYGYPGQGY…GHQTRNQGSH (129 aa)) is disordered. 4 stretches are compositionally biased toward low complexity: residues 38–47 (YSNPGQGQYN), 59–80 (YHQQ…YPPQ), 88–101 (GQQQ…HSQR), and 109–120 (GYDIYGYPIGSG). Residues histidine 244 and cysteine 300 contribute to the active site.

Belongs to the peptidase C14B family.

In terms of biological role, involved in cell death (apoptosis). This is Metacaspase-1A (casA) from Neurospora crassa (strain ATCC 24698 / 74-OR23-1A / CBS 708.71 / DSM 1257 / FGSC 987).